The chain runs to 492 residues: N-succinylglutamate 5-semialdehyde dehydrogenase (492 aa).

220–225 (GSANTG) is a binding site for NAD(+). Catalysis depends on residues E243 and C277.

It belongs to the aldehyde dehydrogenase family. AstD subfamily.

It catalyses the reaction N-succinyl-L-glutamate 5-semialdehyde + NAD(+) + H2O = N-succinyl-L-glutamate + NADH + 2 H(+). The protein operates within amino-acid degradation; L-arginine degradation via AST pathway; L-glutamate and succinate from L-arginine: step 4/5. Catalyzes the NAD-dependent reduction of succinylglutamate semialdehyde into succinylglutamate. This is N-succinylglutamate 5-semialdehyde dehydrogenase from Escherichia coli O81 (strain ED1a).